Reading from the N-terminus, the 1088-residue chain is Methionine S-methyltransferase (1088 aa).

Belongs to the class I-like SAM-binding methyltransferase superfamily. As to quaternary structure, homotetramer.

It is found in the cytoplasm. The enzyme catalyses L-methionine + S-adenosyl-L-methionine = S-methyl-L-methionine + S-adenosyl-L-homocysteine. In terms of biological role, catalyzes the S-methylmethionine (SMM) biosynthesis from adenosyl-L-homocysteine (AdoMet) and methionine. SMM biosynthesis (by MMT1) and degradation (by HMT-1, HMT-2 and HMT-3) constitute the SMM cycle in plants, which is probably required to achieve short term control of AdoMet level. Also able to catalyze the selenium-methylmethionine (SeMM) from AdoMet and selenium-methionine (SeMet). May play a role in phoem sulfur transport; such function is however not essential. This is Methionine S-methyltransferase (MMT1) from Wollastonia biflora (Beach sunflower).